We begin with the raw amino-acid sequence, 871 residues long: Dual O-methyltransferase/FAD-dependent monooxygenase CTB3 (871 aa).

An O-methyltransferase region spans residues 1 to 429 (MMQFQRDLEA…GLLTVRSAGQ (429 aa)). Asp-279 is a binding site for S-adenosyl-L-methionine. His-331 (proton acceptor) is an active-site residue. The tract at residues 430-871 (TALSGTNTLT…NLVDCSEFVF (442 aa)) is FAD-dependent monooxygenase. Residues Glu-485, Arg-569, and Ala-806 each coordinate FAD.

The protein in the C-terminal section; belongs to the paxM FAD-dependent monooxygenase family. This sequence in the N-terminal section; belongs to the class I-like SAM-binding methyltransferase superfamily. Cation-independent O-methyltransferase family. COMT subfamily.

The enzyme catalyses nor-toralactone + S-adenosyl-L-methionine = toralactone + S-adenosyl-L-homocysteine + H(+). It catalyses the reaction toralactone + NADH + O2 + H(+) = 1-(3,4,5-trihydroxy-7-methoxynaphthalen-2-yl)propan-2-one + CO2 + NAD(+). Its pathway is mycotoxin biosynthesis. Functionally, dual O-methyltransferase/FAD-dependent monooxygenase; part of the gene cluster that mediates the biosynthesis of cercosporin, a light-activated, non-host-selective toxin. The perylenequinone chromophore of cercosporin absorbs light energy to attain an electronically-activated triplet state and produces active oxygen species such as the hydroxyl radical, superoxide, hydrogen peroxide or singlet oxygen upon reaction with oxygen molecules. These reactive oxygen species cause damage to various cellular components including lipids, proteins and nucleic acids. The first step of cercosporin biosynthesis is performed by the polyketide synthase CTB1 which catalyzes the formation of nor-toralactone. The starter unit acyltransferase (SAT) domain of CTB1 initiates polyketide extension by the selective utilization of acetyl-CoA, which is elongated to the heptaketide in the beta-ketoacyl synthase (KS) domain by successive condensations with six malonyl units introduced by the malonyl acyltransferase (MAT) domain. The product template (PT) domain catalyzes C4-C9 and C2-C11 aldol cyclizations and dehydrations to a trihydroxynaphthalene, which is thought to be delivered to the thioesterase (TE) domain for product release. The bifunctional enzyme CTB3 then methylates nor-toralactone to toralactone before conducting an unusual oxidative aromatic ring opening. The O-methyltransferase CTB2 further methylates the nascent OH-6 of the CBT3 product, blocking further oxidation at this site before the reductase CTB6 reduces the 2-oxopropyl ketone at position C7, giving naphthalene. The FAD-dependent monooxygenase CTB5 in concert with the multicopper oxidase CTB12 are responsible for homodimerization of naphthalene with CTB7 installing the dioxepine moiety, finally producing cercosporin. The fasciclin domain-containing protein CTB11 might act with CTB5 and CTB12 whereas the roles of CTB9 and CTB10 have still to be elucidated. In Cercospora nicotianae (Barn spot disease fungus), this protein is Dual O-methyltransferase/FAD-dependent monooxygenase CTB3.